The following is a 194-amino-acid chain: dITP/XTP pyrophosphatase (194 aa).

8-13 (TNNPHK) contacts substrate. The active-site Proton acceptor is Asp-69. Residue Asp-69 coordinates Mg(2+). Substrate contacts are provided by residues Thr-70, 150 to 153 (FGYD), Lys-173, and 178 to 179 (HR).

Belongs to the HAM1 NTPase family. In terms of assembly, homodimer. Mg(2+) serves as cofactor.

It carries out the reaction XTP + H2O = XMP + diphosphate + H(+). The enzyme catalyses dITP + H2O = dIMP + diphosphate + H(+). The catalysed reaction is ITP + H2O = IMP + diphosphate + H(+). Functionally, pyrophosphatase that catalyzes the hydrolysis of nucleoside triphosphates to their monophosphate derivatives, with a high preference for the non-canonical purine nucleotides XTP (xanthosine triphosphate), dITP (deoxyinosine triphosphate) and ITP. Seems to function as a house-cleaning enzyme that removes non-canonical purine nucleotides from the nucleotide pool, thus preventing their incorporation into DNA/RNA and avoiding chromosomal lesions. The protein is dITP/XTP pyrophosphatase of Porphyromonas gingivalis (strain ATCC BAA-308 / W83).